The following is a 317-amino-acid chain: Melanocyte-stimulating hormone receptor (317 aa).

Residues Met1–Glu37 are Extracellular-facing. Residue Asn29 is glycosylated (N-linked (GlcNAc...) asparagine). The helical transmembrane segment at Val38–Ile63 threads the bilayer. Residues Ala64–Pro72 are Cytoplasmic-facing. Residues Met73–Leu93 form a helical membrane-spanning segment. Residues Glu94–Asn118 lie on the Extracellular side of the membrane. Residues Val119–Val140 traverse the membrane as a helical segment. Topologically, residues Asp141–Arg163 are cytoplasmic. Residues Ala164–Tyr183 form a helical membrane-spanning segment. Over Asp184–Cys191 the chain is Extracellular. The helical transmembrane segment at Leu192–Leu211 threads the bilayer. The Cytoplasmic portion of the chain corresponds to Val212–Ala240. A helical membrane pass occupies residues Ala241–Leu266. Residues Cys267 to Asn279 lie on the Extracellular side of the membrane. Residues Phe280–Phe300 traverse the membrane as a helical segment. Over Arg301–Trp317 the chain is Cytoplasmic. Cys315 carries the S-palmitoyl cysteine lipid modification.

The protein belongs to the G-protein coupled receptor 1 family. Interacts with MGRN1, but does not undergo MGRN1-mediated ubiquitination; this interaction competes with GNAS-binding and thus inhibits agonist-induced cAMP production. Interacts with OPN3; the interaction results in a decrease in MC1R-mediated cAMP signaling and ultimately a decrease in melanin production in melanocytes.

The protein localises to the cell membrane. Its function is as follows. Receptor for MSH (alpha, beta and gamma) and ACTH. The activity of this receptor is mediated by G proteins which activate adenylate cyclase. Mediates melanogenesis, the production of eumelanin (black/brown) and phaeomelanin (red/yellow), via regulation of cAMP signaling in melanocytes. This Cercopithecus diana (Diana monkey) protein is Melanocyte-stimulating hormone receptor (MC1R).